The chain runs to 152 residues: Small ribosomal subunit protein uS15 (152 aa).

Residues 1–20 (MNKRRANGSSHSTRPVRTGS) are disordered.

Belongs to the universal ribosomal protein uS15 family. Part of the 30S ribosomal subunit.

This chain is Small ribosomal subunit protein uS15, found in Metallosphaera sedula (strain ATCC 51363 / DSM 5348 / JCM 9185 / NBRC 15509 / TH2).